A 1288-amino-acid chain; its full sequence is Symplekin (1288 aa).

An interaction with HSF1 region spans residues 1–124 (MASSSGDSVT…NMLLRDENVN (124 aa)). At serine 13 the chain carries Phosphoserine. HEAT repeat units lie at residues 31–64 (TTSERVVDLLNQAALITNDSKITVLKQVQELIIN), 67–101 (PTLLDNFLDEIIAFQADKSIEVRKFVIGFIEEACK), 104–146 (IELL…WMVK), 153–192 (LQEACWDMVSSMAGEIILLLDSDNDGIRTHAIKFVEGLIV), and 227–266 (VLWEEGKAAVEQLLKFMVHPAISSINLTTALGSLANIARQ). The segment at 335–392 (IARNMPSSKDSRKRPRDDTDSTLKKMKLEPNLGEDDEDKDLEPGPSGTSKASAQISGQ) is disordered. A Nuclear localization signal motif is present at residues 345 to 360 (SRKRPRDDTDSTLKKM). Positions 349 to 362 (PRDDTDSTLKKMKL) are enriched in basic and acidic residues. Lysine 361 participates in a covalent cross-link: Glycyl lysine isopeptide (Lys-Gly) (interchain with G-Cter in SUMO1); alternate. Residue lysine 361 forms a Glycyl lysine isopeptide (Lys-Gly) (interchain with G-Cter in SUMO2); alternate linkage. The segment covering 380 to 392 (SGTSKASAQISGQ) has biased composition (polar residues). Lysine 483 is covalently cross-linked (Glycyl lysine isopeptide (Lys-Gly) (interchain with G-Cter in SUMO2)). Serine 494 carries the post-translational modification Phosphoserine. Disordered stretches follow at residues 1130–1151 (PAPAPAPAPAPAPAPAPRPPQD) and 1163–1288 (LKRQ…KGNS). The span at 1131–1149 (APAPAPAPAPAPAPAPRPP) shows a compositional bias: pro residues. Basic and acidic residues predominate over residues 1163–1173 (LKRQLEEEQKQ). Serine 1238 and serine 1239 each carry phosphoserine. Lysine 1256 is covalently cross-linked (Glycyl lysine isopeptide (Lys-Gly) (interchain with G-Cter in SUMO1)). Residue serine 1260 is modified to Phosphoserine. Basic and acidic residues predominate over residues 1267–1288 (AVEEALKTSSPETREPESKGNS). Threonine 1274 bears the Phosphothreonine mark. Phosphoserine is present on serine 1276.

Belongs to the Symplekin family. In terms of assembly, found in a heat-sensitive complex at least composed of several cleavage and polyadenylation specific and cleavage stimulation factors. Interacts with CPSF2, CPSF3 and CSTF2. Interacts (via N-terminus) with HSF1; this interaction is direct and occurs upon heat shock. Interacts with SSU72.

It is found in the cytoplasm. It localises to the cytoskeleton. The protein resides in the cell junction. Its subcellular location is the tight junction. The protein localises to the cell membrane. It is found in the nucleus. It localises to the nucleoplasm. In terms of biological role, scaffold protein that functions as a component of a multimolecular complex involved in histone mRNA 3'-end processing. Specific component of the tight junction (TJ) plaque, but might not be an exclusively junctional component. May have a house-keeping rule. Is involved in pre-mRNA polyadenylation. Enhances SSU72 phosphatase activity. The chain is Symplekin (Sympk) from Mus musculus (Mouse).